The chain runs to 285 residues: Ribose-phosphate pyrophosphokinase (285 aa).

ATP is bound by residues 33–35 (DGE) and 91–92 (RQ). Residues His-125 and Asp-162 each contribute to the Mg(2+) site. The active site involves Lys-185. D-ribose 5-phosphate is bound by residues Arg-187, Asp-211, and 215-219 (STGGT).

The protein belongs to the ribose-phosphate pyrophosphokinase family. Class III (archaeal) subfamily. It depends on Mg(2+) as a cofactor.

The protein localises to the cytoplasm. The catalysed reaction is D-ribose 5-phosphate + ATP = 5-phospho-alpha-D-ribose 1-diphosphate + AMP + H(+). It functions in the pathway metabolic intermediate biosynthesis; 5-phospho-alpha-D-ribose 1-diphosphate biosynthesis; 5-phospho-alpha-D-ribose 1-diphosphate from D-ribose 5-phosphate (route I): step 1/1. Involved in the biosynthesis of the central metabolite phospho-alpha-D-ribosyl-1-pyrophosphate (PRPP) via the transfer of pyrophosphoryl group from ATP to 1-hydroxyl of ribose-5-phosphate (Rib-5-P). The protein is Ribose-phosphate pyrophosphokinase of Methanothermobacter thermautotrophicus (strain ATCC 29096 / DSM 1053 / JCM 10044 / NBRC 100330 / Delta H) (Methanobacterium thermoautotrophicum).